The sequence spans 968 residues: Phosphoenolpyruvate carboxylase 3 (968 aa).

Residue Ser-11 is modified to Phosphoserine. Active-site residues include His-173 and Lys-603. Residue Ser-705 is modified to Phosphoserine.

This sequence belongs to the PEPCase type 1 family. Homotetramer. It depends on Mg(2+) as a cofactor. As to expression, expressed in roots and siliques, and to a lower extent in stems, leaves and flowers.

The protein resides in the cytoplasm. It catalyses the reaction oxaloacetate + phosphate = phosphoenolpyruvate + hydrogencarbonate. By light-reversible phosphorylation. Through the carboxylation of phosphoenolpyruvate (PEP) it forms oxaloacetate, a four-carbon dicarboxylic acid source for the tricarboxylic acid cycle. This Arabidopsis thaliana (Mouse-ear cress) protein is Phosphoenolpyruvate carboxylase 3 (PPC3).